Here is a 311-residue protein sequence, read N- to C-terminus: Giardin subunit alpha-8 (311 aa).

Annexin repeat units lie at residues 5–73 (RKAY…IRCW), 75–146 (NRHE…DRWM), 154–223 (NNVK…AAHY), and 227–295 (EPSK…SLWR).

This sequence belongs to the annexin family. Giardin subunit alpha subfamily.

The protein resides in the cytoplasm. It is found in the cytoskeleton. Its function is as follows. Giardins are involved in parasite attachment to the intestinal mucosa and in the cytoskeletal disassembly and reassembly that marks the transition from infectious trophozoite to transmissible cyst. They may interact with other cytoskeletal proteins such as microtubules in the microribbons or crossbridges, to maintain the integrity of the ventral disk. The chain is Giardin subunit alpha-8 from Giardia intestinalis (Giardia lamblia).